The primary structure comprises 256 residues: Probable septum site-determining protein MinC (256 aa).

A disordered region spans residues 105 to 143; it reads RRGATAKPEPADEAEPPVAAAAAEAVPEPAPELAPSAPT. Residues 120-142 show a composition bias toward low complexity; that stretch reads PPVAAAAAEAVPEPAPELAPSAP.

It belongs to the MinC family. Interacts with MinD and FtsZ.

Its function is as follows. Cell division inhibitor that blocks the formation of polar Z ring septums. Rapidly oscillates between the poles of the cell to destabilize FtsZ filaments that have formed before they mature into polar Z rings. Prevents FtsZ polymerization. The chain is Probable septum site-determining protein MinC from Burkholderia vietnamiensis (strain G4 / LMG 22486) (Burkholderia cepacia (strain R1808)).